The chain runs to 227 residues: PKHD-type hydroxylase Bxeno_B2194 (227 aa).

A Fe2OG dioxygenase domain is found at Lys-78–Ser-178. Fe cation-binding residues include His-96, Asp-98, and His-159. 2-oxoglutarate is bound at residue Arg-169.

The cofactor is Fe(2+). It depends on L-ascorbate as a cofactor.

This chain is PKHD-type hydroxylase Bxeno_B2194, found in Paraburkholderia xenovorans (strain LB400).